Reading from the N-terminus, the 194-residue chain is Imidazoleglycerol-phosphate dehydratase (194 aa).

This sequence belongs to the imidazoleglycerol-phosphate dehydratase family.

It localises to the cytoplasm. It carries out the reaction D-erythro-1-(imidazol-4-yl)glycerol 3-phosphate = 3-(imidazol-4-yl)-2-oxopropyl phosphate + H2O. The protein operates within amino-acid biosynthesis; L-histidine biosynthesis; L-histidine from 5-phospho-alpha-D-ribose 1-diphosphate: step 6/9. In Thermus thermophilus (strain ATCC 27634 / DSM 579 / HB8), this protein is Imidazoleglycerol-phosphate dehydratase.